A 314-amino-acid polypeptide reads, in one-letter code: Lysophospholipase D GDPD1 (314 aa).

Residues 1–3 (MSS) are Extracellular-facing. A helical transmembrane segment spans residues 4–24 (TAAFCLLSTLGGYLVTSFLLL). Residues 25–195 (KYPALLHQRK…VDKCYKENSD (171 aa)) are Cytoplasmic-facing. The 270-residue stretch at 40–309 (SRHISHRGGA…DYPTKLKEFL (270 aa)) folds into the GP-PDE domain. 3 residues coordinate a divalent metal cation: Glu72, Asp74, and His87. The chain crosses the membrane as a helical span at residues 196–216 (IPILFSLQRVLLILGLFFTGL). Residues 217–314 (LPFVPIREQF…LKEFLNNMSA (98 aa)) are Extracellular-facing.

This sequence belongs to the glycerophosphoryl diester phosphodiesterase family.

It is found in the cytoplasm. It localises to the membrane. The protein localises to the perinuclear region. Its subcellular location is the endoplasmic reticulum. It carries out the reaction a 1-O-alkyl-sn-glycero-3-phosphocholine + H2O = a 1-O-alkyl-sn-glycero-3-phosphate + choline + H(+). The catalysed reaction is 1-hexadecanoyl-sn-glycero-3-phosphocholine + H2O = 1-hexadecanoyl-sn-glycero-3-phosphate + choline + H(+). The enzyme catalyses 1-hexadecanoyl-sn-glycero-3-phosphoethanolamine + H2O = 1-hexadecanoyl-sn-glycero-3-phosphate + ethanolamine + H(+). It catalyses the reaction N-hexadecanoyl-sn-glycero-3-phosphoethanolamine + H2O = N-hexadecanoylethanolamine + sn-glycerol 3-phosphate + H(+). It carries out the reaction N-(5Z,8Z,11Z,14Z-eicosatetraenoyl)-1-(9Z-octadecenoyl)-sn-glycero-3-phosphoethanolamine + H2O = N-(5Z,8Z,11Z,14Z-eicosatetraenoyl)-ethanolamine + 1-(9Z-octadecenoyl)-sn-glycero-3-phosphate + H(+). The catalysed reaction is N,1-di-(9Z-octadecenoyl)-sn-glycero-3-phosphoethanolamine + H2O = N-(9Z-octadecenoyl) ethanolamine + 1-(9Z-octadecenoyl)-sn-glycero-3-phosphate + H(+). The enzyme catalyses N-hexadecanoyl-1-(9Z-octadecenoyl)-sn-glycero-3-phosphoethanolamine + H2O = N-hexadecanoylethanolamine + 1-(9Z-octadecenoyl)-sn-glycero-3-phosphate + H(+). It catalyses the reaction 1-O-hexadecyl-sn-glycero-3-phosphocholine + H2O = 1-O-hexadecyl-sn-glycero-3-phosphate + choline + H(+). It carries out the reaction 1-(9Z-octadecenoyl)-sn-glycero-3-phosphocholine + H2O = 1-(9Z-octadecenoyl)-sn-glycero-3-phosphate + choline + H(+). The catalysed reaction is N,1-dihexadecanoyl-sn-glycero-3-phosphoethanolamine + H2O = N-hexadecanoylethanolamine + 1-hexadecanoyl-sn-glycero-3-phosphate + H(+). The enzyme catalyses 1-O-(1Z-octadecenyl)-sn-glycero-3-phospho-(N-5Z,8Z,11Z,14Z-eicosatetraenoyl)-ethanolamine + H2O = 1-O-(1Z-octadecenyl)-sn-glycero-3-phosphate + N-(5Z,8Z,11Z,14Z-eicosatetraenoyl)-ethanolamine + H(+). It catalyses the reaction 1-O-(1Z-octadecenyl)-sn-glycero-3-phospho-(N-9Z-octadecenoyl)-ethanolamine + H2O = 1-O-(1Z-octadecenyl)-sn-glycero-3-phosphate + N-(9Z-octadecenoyl) ethanolamine + H(+). It carries out the reaction 1-O-(1Z-octadecenyl)-sn-glycero-3-phospho-N-hexadecanoyl-ethanolamine + H2O = 1-O-(1Z-octadecenyl)-sn-glycero-3-phosphate + N-hexadecanoylethanolamine + H(+). With respect to regulation, lysophospholipase D activity is increased by magnesium and manganese and inhibited by calcium in a concentration dependent manner. Loss of lysophospholipase D activity by addition of EDTA. Functionally, hydrolyzes lysoglycerophospholipids to produce lysophosphatidic acid (LPA) and the corresponding amines. Shows a preference for 1-O-alkyl-sn-glycero-3-phosphocholine (lyso-PAF), lysophosphatidylethanolamine (lyso-PE) and lysophosphatidylcholine (lyso-PC). May be involved in bioactive N-acylethanolamine biosynthesis from both N-acyl-lysoplasmenylethanolamin (N-acyl-lysoPlsEt) and N-acyl-lysophosphatidylethanolamin (N-acyl-lysoPE). In addition, hydrolyzes glycerophospho-N-acylethanolamine to N-acylethanolamine. Does not display glycerophosphodiester phosphodiesterase activity, since it cannot hydrolyze either glycerophosphoinositol or glycerophosphocholine. The polypeptide is Lysophospholipase D GDPD1 (Rattus norvegicus (Rat)).